The chain runs to 708 residues: Protein psiF (708 aa).

An N-terminal signal peptide occupies residues 1 to 19; sequence MKYLFIAIILILYCSFTKA. Residues 20–643 lie on the Extracellular side of the membrane; the sequence is DQKKFLVNMY…QSTAVKVGVG (624 aa). N78, N116, N222, N317, N318, N371, N498, and N600 each carry an N-linked (GlcNAc...) asparagine glycan. One can recognise a PA14 domain in the interval 103 to 263; sequence TQTAGSQNYY…YDYCGICNGK (161 aa). A helical membrane pass occupies residues 644–664; sequence IGAAAAAGIAIGGAVAAGLAI. The Cytoplasmic portion of the chain corresponds to 665 to 708; it reads FGGKKAYDTWKTSRGNVMTGSQSNPLYTQNQNNGNNPLYSAPAE. A compositionally biased stretch (polar residues) spans 682-702; that stretch reads MTGSQSNPLYTQNQNNGNNPL. Positions 682-708 are disordered; it reads MTGSQSNPLYTQNQNNGNNPLYSAPAE.

Belongs to the prespore-cell-inducing factor family. In terms of assembly, forms a complex with dicB.

Its subcellular location is the membrane. The protein localises to the secreted. Its function is as follows. Acts as a quorum sensing protein regulating discoidin gene expression during growth and development. D.discoideum is a single-celled amoebae and switches to multicellular development when food becomes limited. As the growing cells reach a high density, they begin expressing discoidin genes. The ability of psiF/dicA to induce discoidin gene expression when present in conditioned medium, suggests that it allows cells to sense their local density. This Dictyostelium discoideum (Social amoeba) protein is Protein psiF (psiF).